The chain runs to 187 residues: BCL2/adenovirus E1B 19 kDa protein-interacting protein 3 (187 aa).

A disordered region spans residues 42–86 (LDAQHESGRSSSKSSHCDSPPRSQTPQDTNRAEIDSHSFGEKNST). Ser-48, Ser-60, Ser-77, Ser-79, Ser-85, and Ser-88 each carry phosphoserine. Over residues 50–63 (RSSSKSSHCDSPPR) the composition is skewed to low complexity. Residues 71–81 (NRAEIDSHSFG) are compositionally biased toward basic and acidic residues. The BH3 motif lies at 93–118 (IERRREVESILKKNSDWIWDWSSRPE). The helical transmembrane segment at 157–177 (VFLPSLLLSHLLAIGLGIYIG) threads the bilayer.

This sequence belongs to the NIP3 family. In terms of assembly, homodimer. Binds to BCL2. Interacts with BNIP3L and ACAA2. Interacts (via BH3 domain) with SPATA18 (via coiled-coil domains). Interacts with BOK; promotes BOK oligomerization. Interacts with PPTC7; this interaction promotes BNIP3 degradation.

It is found in the mitochondrion. The protein resides in the mitochondrion outer membrane. Its function is as follows. Apoptosis-inducing protein that can overcome BCL2 suppression. May play a role in repartitioning calcium between the two major intracellular calcium stores in association with BCL2. Involved in mitochondrial quality control via its interaction with SPATA18/MIEAP: in response to mitochondrial damage, participates in mitochondrial protein catabolic process (also named MALM) leading to the degradation of damaged proteins inside mitochondria. The physical interaction of SPATA18/MIEAP, BNIP3 and BNIP3L/NIX at the mitochondrial outer membrane may play a critical role in the translocation of lysosomal proteins from the cytoplasm to the mitochondrial matrix. The physical interaction of SPATA18/MIEAP, BNIP3 and BNIP3L/NIX at the mitochondrial outer membrane regulates the opening of a pore in the mitochondrial double membrane in order to mediate the translocation of lysosomal proteins from the cytoplasm to the mitochondrial matrix. Plays an important role in the calprotectin (S100A8/A9)-induced cell death pathway. In Mus musculus (Mouse), this protein is BCL2/adenovirus E1B 19 kDa protein-interacting protein 3.